A 645-amino-acid polypeptide reads, in one-letter code: DNA mismatch repair protein MutL (645 aa).

The protein belongs to the DNA mismatch repair MutL/HexB family.

In terms of biological role, this protein is involved in the repair of mismatches in DNA. It is required for dam-dependent methyl-directed DNA mismatch repair. May act as a 'molecular matchmaker', a protein that promotes the formation of a stable complex between two or more DNA-binding proteins in an ATP-dependent manner without itself being part of a final effector complex. In Geobacillus thermodenitrificans (strain NG80-2), this protein is DNA mismatch repair protein MutL.